A 190-amino-acid chain; its full sequence is Lipid A acyltransferase PagP (190 aa).

The first 29 residues, 1 to 29 (MYVAMIIRKYFLIIALLVMPWLAIPSVSA), serve as a signal peptide directing secretion. Residues His-62, Asp-105, and Ser-106 contribute to the active site.

The protein belongs to the lipid A palmitoyltransferase family. As to quaternary structure, homodimer.

It is found in the cell outer membrane. The enzyme catalyses a lipid A + a 1,2-diacyl-sn-glycero-3-phosphocholine = a hepta-acyl lipid A + a 2-acyl-sn-glycero-3-phosphocholine. The catalysed reaction is a lipid IVA + a 1,2-diacyl-sn-glycero-3-phosphocholine = a lipid IVB + a 2-acyl-sn-glycero-3-phosphocholine. It catalyses the reaction a lipid IIA + a 1,2-diacyl-sn-glycero-3-phosphocholine = a lipid IIB + a 2-acyl-sn-glycero-3-phosphocholine. Functionally, transfers a fatty acid residue from the sn-1 position of a phospholipid to the N-linked hydroxyfatty acid chain on the proximal unit of lipid A or its precursors. The sequence is that of Lipid A acyltransferase PagP from Salmonella typhi.